A 1023-amino-acid polypeptide reads, in one-letter code: Sodium/potassium-transporting ATPase subunit alpha-1 (1023 aa).

A propeptide spanning residues M1–V5 is cleaved from the precursor. Residues M1 to E11 are compositionally biased toward basic and acidic residues. The interval M1–E38 is disordered. The Cytoplasmic segment spans residues G6–P87. K9 carries the post-translational modification N6-acetyllysine. Y10 carries the phosphotyrosine modification. The residue at position 16 (S16) is a Phosphoserine; by PKC. Residue K21 is modified to N6-acetyllysine. Basic and acidic residues predominate over residues K28 to E38. S40 and S47 each carry phosphoserine. A phosphoinositide-3 kinase binding region spans residues P82–P84. A helical membrane pass occupies residues E88–A108. At I109–Y131 the chain is on the extracellular side. Residues L132 to A152 form a helical membrane-spanning segment. The Cytoplasmic portion of the chain corresponds to K153–I288. The segment at S216 to N235 is disordered. The residue at position 228 (S228) is a Phosphoserine. Position 260 is a phosphotyrosine (Y260). The helical transmembrane segment at E289–I308 threads the bilayer. The Extracellular segment spans residues L309–A320. A helical transmembrane segment spans residues V321–A338. At T339–L772 the chain is on the cytoplasmic side. The active-site 4-aspartylphosphate intermediate is D376. Residues S452 and S484 each carry the phosphoserine modification. Residue K487 coordinates ATP. Y542 is modified (phosphotyrosine). A mediates interaction with SCN7A region spans residues R596–D717. K661 bears the N6-succinyllysine mark. 2 positions are modified to phosphoserine: S668 and S675. D717 and D721 together coordinate Mg(2+). The chain crosses the membrane as a helical span at residues K773–I792. Residues F793–L802 are Extracellular-facing. Residues G803–A823 form a helical membrane-spanning segment. The Cytoplasmic portion of the chain corresponds to Y824 to K843. Residues L844 to F866 traverse the membrane as a helical segment. At F867 to C918 the chain is on the extracellular side. A helical membrane pass occupies residues H919 to K938. Topologically, residues T939 to N951 are cytoplasmic. S943 bears the Phosphoserine; by PKA mark. A helical membrane pass occupies residues K952 to Y970. The Extracellular portion of the chain corresponds to C971–P985. The chain crosses the membrane as a helical span at residues T986–K1006. Topologically, residues L1007–Y1023 are cytoplasmic.

The protein belongs to the cation transport ATPase (P-type) (TC 3.A.3) family. Type IIC subfamily. As to quaternary structure, the sodium/potassium-transporting ATPase is composed of a catalytic alpha subunit, an auxiliary non-catalytic beta subunit and an additional regulatory subunit. Interacts with regulatory subunit FXYD1. Interacts with regulatory subunit FXYD3. Interacts with SIK1. Interacts with SLC35G1 and STIM1. Interacts with CLN3; this interaction regulates the sodium/potassium-transporting ATPase complex localization at the plasma membrane. Interacts with SCN7A; activates ATP1A1 P-type sodium:potassium-exchanging transporter activity which indirectly signals to nearby neurons to regulate sodium homeostasis. Phosphorylation on Tyr-10 modulates pumping activity. Phosphorylation of Ser-943 by PKA modulates the response of ATP1A1 to PKC. Dephosphorylation by protein phosphatase 2A (PP2A) following increases in intracellular sodium, leading to increase catalytic activity.

It localises to the cell membrane. The protein resides in the basolateral cell membrane. It is found in the sarcolemma. Its subcellular location is the cell projection. The protein localises to the axon. It localises to the melanosome. It carries out the reaction K(+)(out) + Na(+)(in) + ATP + H2O = K(+)(in) + Na(+)(out) + ADP + phosphate + H(+). This is the catalytic component of the active enzyme, which catalyzes the hydrolysis of ATP coupled with the exchange of sodium and potassium ions across the plasma membrane. This action creates the electrochemical gradient of sodium and potassium ions, providing the energy for active transport of various nutrients. Could also be part of an osmosensory signaling pathway that senses body-fluid sodium levels and controls salt intake behavior as well as voluntary water intake to regulate sodium homeostasis. This is Sodium/potassium-transporting ATPase subunit alpha-1 (ATP1A1) from Pongo abelii (Sumatran orangutan).